Here is a 396-residue protein sequence, read N- to C-terminus: Gap junction gamma-1 protein (396 aa).

The Cytoplasmic segment spans residues 1-22 (MSWSFLTRLLEEIHNHSTFVGK). The helical transmembrane segment at 23-45 (IWLTVLIAFRIALTAVGGESIYY) threads the bilayer. Residues 46 to 75 (DEQSKFVCNTEQPGCENVCYDAFAPLSHVR) are Extracellular-facing. A helical membrane pass occupies residues 76-95 (FWVFQIILVATPSVMYLGYA). Over 96-175 (IHKIAKMEHG…RRIREDGLMK (80 aa)) the chain is Cytoplasmic. The segment at 145–165 (ELESEKENKEQNQPKPKHDGR) is disordered. The span at 147–156 (ESEKENKEQN) shows a compositional bias: basic and acidic residues. A helical membrane pass occupies residues 176 to 198 (IYVLQLLARTVFEVGFLIGQYFL). Residues 199 to 228 (YGFQVHPFYVCSRLPCPHKIDCFISRPTEK) are Extracellular-facing. Residues 229–248 (TIFLLIMYGVTGLCLLLNIW) form a helical membrane-spanning segment. Residues 249–396 (EMLHLGFGTI…SGDGKNSVWI (148 aa)) lie on the Cytoplasmic side of the membrane. The segment at 355 to 396 (AYSHQNNPHGPREKKAKVGSKAGSNKSSASSKSGDGKNSVWI) is disordered. The span at 373–396 (GSKAGSNKSSASSKSGDGKNSVWI) shows a compositional bias: low complexity.

This sequence belongs to the connexin family. Gamma-type subfamily. In terms of assembly, a connexon is composed of a hexamer of connexins. Interacts with CNST.

The protein localises to the cell membrane. It localises to the cell junction. It is found in the gap junction. One gap junction consists of a cluster of closely packed pairs of transmembrane channels, the connexons, through which materials of low MW diffuse from one cell to a neighboring cell. In Canis lupus familiaris (Dog), this protein is Gap junction gamma-1 protein (GJC1).